The chain runs to 568 residues: Urease subunit alpha (568 aa).

Positions 130–568 (GGIDSHIHFI…LPMAQRYFLF (439 aa)) constitute a Urease domain. Ni(2+) is bound by residues His135, His137, and Lys218. N6-carboxylysine is present on Lys218. Residue His220 coordinates substrate. His247 and His273 together coordinate Ni(2+). Catalysis depends on His321, which acts as the Proton donor. Ni(2+) is bound at residue Asp361.

This sequence belongs to the metallo-dependent hydrolases superfamily. Urease alpha subunit family. Heterotrimer of UreA (gamma), UreB (beta) and UreC (alpha) subunits. Three heterotrimers associate to form the active enzyme. Requires Ni cation as cofactor. Post-translationally, carboxylation allows a single lysine to coordinate two nickel ions.

Its subcellular location is the cytoplasm. It carries out the reaction urea + 2 H2O + H(+) = hydrogencarbonate + 2 NH4(+). It functions in the pathway nitrogen metabolism; urea degradation; CO(2) and NH(3) from urea (urease route): step 1/1. The protein is Urease subunit alpha of Nitrosospira multiformis (strain ATCC 25196 / NCIMB 11849 / C 71).